We begin with the raw amino-acid sequence, 126 residues long: Fluoride-specific ion channel FluC (126 aa).

The next 4 helical transmembrane spans lie at 5 to 25 (VLAV…LGLW), 35 to 55 (WGTL…MAFF), 68 to 88 (FAVT…LEMF), and 99 to 119 (ALVG…LGFL). The Na(+) site is built by Gly-75 and Thr-78.

It belongs to the fluoride channel Fluc/FEX (TC 1.A.43) family.

It localises to the cell inner membrane. It carries out the reaction fluoride(in) = fluoride(out). Na(+) is not transported, but it plays an essential structural role and its presence is essential for fluoride channel function. In terms of biological role, fluoride-specific ion channel. Important for reducing fluoride concentration in the cell, thus reducing its toxicity. The polypeptide is Fluoride-specific ion channel FluC (Marinobacter nauticus (strain ATCC 700491 / DSM 11845 / VT8) (Marinobacter aquaeolei)).